The following is a 431-amino-acid chain: Reticulon-like protein B17 (431 aa).

Disordered regions lie at residues Met-1–Val-110 and Pro-126–Asp-152. Residues Thr-12–Asn-26 show a composition bias toward polar residues. The segment covering Pro-126 to Lys-138 has biased composition (basic residues). Over residues Ser-142 to Asp-152 the composition is skewed to polar residues. Residues Ile-168–Ile-355 form the Reticulon domain. 4 consecutive transmembrane segments (helical) span residues Val-177–Ala-197, Phe-202–Ser-222, Tyr-286–Ile-306, and Phe-349–Phe-369. Acidic residues predominate over residues Glu-382–Gln-415. The interval Glu-382–Arg-422 is disordered.

Its subcellular location is the endoplasmic reticulum membrane. The protein is Reticulon-like protein B17 (RTNLB17) of Arabidopsis thaliana (Mouse-ear cress).